Consider the following 552-residue polypeptide: Glutamate--tRNA ligase (552 aa).

The 'HIGH' region signature appears at 41-51 (PSPTGFQHIGG). Residues 293-297 (KLSKR) carry the 'KMSKS' region motif. Lys-296 serves as a coordination point for ATP.

Belongs to the class-I aminoacyl-tRNA synthetase family. Glutamate--tRNA ligase type 1 subfamily. In terms of assembly, monomer.

The protein localises to the cytoplasm. The enzyme catalyses tRNA(Glu) + L-glutamate + ATP = L-glutamyl-tRNA(Glu) + AMP + diphosphate. In terms of biological role, catalyzes the attachment of glutamate to tRNA(Glu) in a two-step reaction: glutamate is first activated by ATP to form Glu-AMP and then transferred to the acceptor end of tRNA(Glu). The polypeptide is Glutamate--tRNA ligase (Clostridium perfringens (strain SM101 / Type A)).